An 84-amino-acid chain; its full sequence is Small ribosomal subunit protein uS17 (84 aa).

It belongs to the universal ribosomal protein uS17 family. Part of the 30S ribosomal subunit.

Its function is as follows. One of the primary rRNA binding proteins, it binds specifically to the 5'-end of 16S ribosomal RNA. This is Small ribosomal subunit protein uS17 from Treponema pallidum (strain Nichols).